The chain runs to 83 residues: Small ribosomal subunit protein uS17 (83 aa).

It belongs to the universal ribosomal protein uS17 family. Part of the 30S ribosomal subunit.

In terms of biological role, one of the primary rRNA binding proteins, it binds specifically to the 5'-end of 16S ribosomal RNA. The sequence is that of Small ribosomal subunit protein uS17 from Campylobacter hominis (strain ATCC BAA-381 / DSM 21671 / CCUG 45161 / LMG 19568 / NCTC 13146 / CH001A).